Consider the following 284-residue polypeptide: MSDQAEPGFVRVRLDLSYDGKDFSGWAKQTSRRTVQGEIEDALRTVTRSSVTYDLTVAGRTDAGVHARGQVAHVDLPEAVWAEHEEKLLRRLAGRLPLDVRIWRAAPAPAGFNARFSALWRRYAYRVGDRPGGVDPLTRGHVLWHDRPLDLDAMNEAAALMVGEHDFAAYCKKREGATTIRTLQKLRWVRDPATGVLTATVQADAFCHNMVRALIGAALFVGDGRRPAAWPAEVLAAKVRDPGVHVVRPHGLTLEEVAYPADALLAARAAEARNVRTLPGAGCC.

Asp-62 acts as the Nucleophile in catalysis. Tyr-123 is a substrate binding site.

The protein belongs to the tRNA pseudouridine synthase TruA family. Homodimer.

The catalysed reaction is uridine(38/39/40) in tRNA = pseudouridine(38/39/40) in tRNA. Formation of pseudouridine at positions 38, 39 and 40 in the anticodon stem and loop of transfer RNAs. The polypeptide is tRNA pseudouridine synthase A (Streptomyces griseus subsp. griseus (strain JCM 4626 / CBS 651.72 / NBRC 13350 / KCC S-0626 / ISP 5235)).